The chain runs to 1218 residues: NACHT, LRR and PYD domains-containing protein 1 allele 2 (1218 aa).

Residues 1–61 are disordered; the sequence is MEESQSKQES…SLPGWSSTSK (61 aa). The segment covering 7-29 has biased composition (polar residues); sequence KQESNTRVAQHGSQQDVDPTFQT. The NACHT domain occupies 175–484; sequence QLVIIEGAAG…EFFAAMSYIL (310 aa). 181–188 is an ATP binding site; the sequence is GAAGIGKS. LRR repeat units follow at residues 343–364, 673–693, and 730–750; these read KERNTIIDFNLIGSIPVLLTLC, NLEELDLSGNPLSYSAVRSLC, and RLAELDLRLNDLGDNGVRQLC. Over residues 799–815 the composition is skewed to polar residues; that stretch reads TMPTENTDGEESLTSSK. A disordered region spans residues 799 to 842; the sequence is TMPTENTDGEESLTSSKQQQQQSGDKHMEPLGTDDDFWGPSGPV. Positions 835–968 are ZU5; it reads FWGPSGPVST…HFAVLENPSF (134 aa). Positions 835 to 1118 constitute an FIIND domain; sequence FWGPSGPVST…LRPALPRMAS (284 aa). A UPA region spans residues 969–1118; the sequence is SPMGVLLRMI…LRPALPRMAS (150 aa). The CARD domain maps to 1122-1211; the sequence is DAPALLHFVD…HLIMDLLEKS (90 aa).

Belongs to the NLRP family. In terms of assembly, interacts (via LRR repeats) with BCL2 and BCL2L1 (via the loop between motifs BH4 and BH3). Interacts with NOD2; this interaction is enhanced in the presence of muramyl dipeptide (MDP) and increases IL1B release. Interacts with EIF2AK2/PKR; this interaction requires EIF2AK2 activity, is accompanied by EIF2AK2 autophosphorylation and promotes inflammasome assembly in response to danger-associated signals. Interacts with MEFV; this interaction targets Nlrp1a to degradation by autophagy, hence preventing excessive IL1B- and IL18-mediated inflammation. Interacts with DPP9; leading to inhibit activation of the inflammasome. DPP9 acts via formation of a ternary complex, composed of a DPP9 homodimer, one full-length NLRP1 protein, and one cleaved C-terminus of Nlrp1a (NACHT, LRR and PYD domains-containing protein 1a, C-terminus). Interacts with DPP8; leading to inhibit activation of the inflammasome, probably via formation of a ternary complex with DPP8. Interacts with the C-terminal part of Nlrp1a (NACHT, LRR and PYD domains-containing protein 1a, C-terminus) in absence of pathogens and other damage-associated signals. As to quaternary structure, interacts with the N-terminal part of Nlrp1a (NACHT, LRR and PYD domains-containing protein 1a, N-terminus) in absence of pathogens and other damage-associated signals. Homomultimer; forms the Nlrp1a inflammasome polymeric complex, a filament composed of homopolymers of this form in response to pathogens and other damage-associated signals. The Nlrp1a inflammasome polymeric complex directly recruits pro-caspase-1 (proCASP1) independently of PYCARD/ASC. Interacts (via CARD domain) with CASP1 (via CARD domain); leading to CASP1 activation. Post-translationally, autocatalytically cleaved. Autocatalytic cleavage in FIIND region occurs constitutively, prior to activation signals, and is required for inflammasome activity (IL1B release), possibly by facilitating CASP1 binding. Both N- and C-terminal parts remain associated non-covalently. (Microbial infection) Cleavage by B.anthracis lethal toxin (LT) endopeptidase promotes ubiquitination and degradation of the N-terminal part, releasing the cleaved C-terminal part of the protein (NACHT, LRR and PYD domains-containing protein 1a, C-terminus), which polymerizes and forms the Nlrp1a inflammasome. In terms of processing, ubiquitinated in response to pathogen-associated signals, leading to its degradation by the proteasome and subsequent release of the cleaved C-terminal part of the protein (NACHT, LRR and PYD domains-containing protein 1a, C-terminus), which polymerizes and forms the Nlrp1a inflammasome.

It localises to the cytoplasm. Its subcellular location is the cytosol. The protein resides in the nucleus. The protein localises to the inflammasome. With respect to regulation, activated by cleavage by B.anthracis lethal toxin (LT) endopeptidase. Cleavage by LT promotes ubiquitination and degradation of the N-terminal part, releasing the cleaved C-terminal part of the protein (NACHT, LRR and PYD domains-containing protein 1a, C-terminus), which polymerizes and forms the Nlrp1a inflammasome. Nlrp1a inflammasome is inhibited by DPP8 and DPP9, which sequester the C-terminal fragment of Nlrp1a (NACHT, LRR and PYD domains-containing protein 1a, C-terminus) in a ternary complex, thereby preventing Nlrp1a oligomerization and activation. Nlrp1a inflammasome is weakly activated by Val-boroPro (Talabostat, PT-100), an inhibitor of dipeptidyl peptidases DPP8 and DPP9. Val-boroPro relieves inhibition of DPP8 and/or DPP9 by promoting disruption of the ternary complex, releasing its C-terminal part from autoinhibition. Weakly activated by Toxoplasma gondii. Functionally, acts as the sensor component of the Nlrp1a inflammasome, which mediates inflammasome activation in response to various pathogen-associated signals, leading to subsequent pyroptosis. Inflammasomes are supramolecular complexes that assemble in the cytosol in response to pathogens and other damage-associated signals and play critical roles in innate immunity and inflammation. Acts as a recognition receptor (PRR): recognizes specific pathogens and other damage-associated signals, such as B.anthracis lethal toxin (LT) or Val-boroPro inhibitor, and mediates the formation of the inflammasome polymeric complex. In response to pathogen-associated signals, the N-terminal part of Nlrp1a is degraded by the proteasome, releasing the cleaved C-terminal part of the protein (NACHT, LRR and PYD domains-containing protein 1a, C-terminus), which polymerizes to initiate the formation of the inflammasome complex: the inflammasome directly recruits pro-caspase-1 (proCASP1) independently of PYCARD/ASC and promotes caspase-1 (CASP1) activation, which subsequently cleaves and activates inflammatory cytokines IL1B and IL18 and gasdermin-D (GSDMD), leading to pyroptosis. In the absence of GSDMD expression, the Nlrp1a inflammasome is able to recruit and activate CASP8, leading to activation of gasdermin-E (GSDME). Its function is as follows. Constitutes the precursor of the Nlrp1a inflammasome, which mediates autoproteolytic processing within the FIIND domain to generate the N-terminal and C-terminal parts, which are associated non-covalently in absence of pathogens and other damage-associated signals. In terms of biological role, regulatory part that prevents formation of the Nlrp1a inflammasome: in absence of pathogens and other damage-associated signals, interacts with the C-terminal part of Nlrp1a (NACHT, LRR and PYD domains-containing protein 1a, C-terminus), preventing activation of the Nlrp1a inflammasome. In response to pathogen-associated signals, this part is ubiquitinated by the N-end rule pathway and degraded by the proteasome, releasing the cleaved C-terminal part of the protein, which polymerizes and forms the Nlrp1a inflammasome. Constitutes the active part of the Nlrp1a inflammasome. In absence of pathogens and other damage-associated signals, interacts with the N-terminal part of Nlrp1a (NACHT, LRR and PYD domains-containing protein 1a, N-terminus), preventing activation of the Nlrp1a inflammasome. In response to pathogen-associated signals, the N-terminal part of Nlrp1a is degraded by the proteasome, releasing this form, which polymerizes to form the Nlrp1a inflammasome complex: the Nlrp1a inflammasome complex then directly recruits pro-caspase-1 (proCASP1) and promotes caspase-1 (CASP1) activation, leading to gasdermin-D (GSDMD) cleavage and subsequent pyroptosis. The sequence is that of NACHT, LRR and PYD domains-containing protein 1 allele 2 from Rattus norvegicus (Rat).